Reading from the N-terminus, the 370-residue chain is Translocating chain-associated membrane protein 2 (370 aa).

Topologically, residues 1–22 are cytoplasmic; sequence MAFRRRTKSYPLFSQEFIIHNH. A helical transmembrane segment spans residues 23 to 43; that stretch reads ADIGFCLVLCVLIGLMFEVTA. Topologically, residues 44–75 are extracellular; sequence KTAFLFILPQYNISVPTADSETVHYHYGPKDL. Asn55 carries an N-linked (GlcNAc...) asparagine glycan. A helical transmembrane segment spans residues 76–96; that stretch reads VTILFYVVITIIFHAVVQEYI. The Cytoplasmic segment spans residues 97-119; sequence LDKISKRLHLSKVKHSKFNESGQ. Residues 112–321 form the TLC domain; it reads SKFNESGQLL…HSQLRHWREY (210 aa). The helical transmembrane segment at 120 to 140 threads the bilayer; it reads LLVFHLSAVAWCFYVIVTEGY. Residues 141–159 are Extracellular-facing; sequence LTNPRSLWEDYPHVYLSFQ. Residues 160–180 traverse the membrane as a helical segment; that stretch reads VKFFYLGQLAYWLHSLPELYF. Residues 181-191 are Cytoplasmic-facing; the sequence is QKVRKEEVPRQ. A helical membrane pass occupies residues 192–209; it reads LQYICLYLLHITGAYLLN. Topologically, residues 210–214 are extracellular; sequence LSRLG. A helical transmembrane segment spans residues 215-235; sequence LILLLLQYSTEALFHMARLFH. Over 236–250 the chain is Cytoplasmic; the sequence is FADENNERLFNAWAA. The helical transmembrane segment at 251–271 threads the bilayer; that stretch reads VFGVTRLFILTLAVLTIGFGL. The Extracellular segment spans residues 272 to 287; sequence ARVENQVFDPEKGNFN. The chain crosses the membrane as a helical span at residues 288-308; it reads TLPCRLGMLLLVCVAQAWLMW. Over 309–370 the chain is Cytoplasmic; the sequence is RFIHSQLRHW…SSRTKKLKSP (62 aa). A disordered region spans residues 332-370; it reads SAVPRPPAKLLKREPGYHENGVVKAENGTSSRTKKLKSP.

It belongs to the TRAM family. Interacts with COL1A1. Interacts with SERCA2B.

The protein localises to the membrane. Necessary for collagen type I synthesis. May couple the activity of the ER Ca(2+) pump SERCA2B with the activity of the translocon. This coupling may increase the local Ca(2+) concentration at the site of collagen synthesis, and a high Ca(2+) concentration may be necessary for the function of molecular chaperones involved in collagen folding. Required for proper insertion of the first transmembrane helix N-terminus of TM4SF20 into the ER lumen, may act as a ceramide sensor for regulated alternative translocation (RAT). In Mus musculus (Mouse), this protein is Translocating chain-associated membrane protein 2 (Tram2).